The sequence spans 528 residues: Calcium-dependent protein kinase 13 (528 aa).

Gly-2 is lipidated: N-myristoyl glycine. The span at 17 to 32 (KSNYSGHDHARKDAAG) shows a compositional bias: basic and acidic residues. The disordered stretch occupies residues 17–37 (KSNYSGHDHARKDAAGGKKSA). Ser-43 carries the post-translational modification Phosphoserine. Positions 54–312 (YLLDRELGRG…AKQVLEHPWI (259 aa)) constitute a Protein kinase domain. ATP is bound by residues 60 to 68 (LGRGEFGVT) and Lys-83. Catalysis depends on Asp-178, which acts as the Proton acceptor. Ser-218 bears the Phosphoserine mark. Positions 318-348 (APNVPLGDVVKSRLKQFSVMNRFKRKALRVI) are autoinhibitory domain. EF-hand domains are found at residues 355 to 390 (EEVE…FSTQ), 391 to 426 (LAES…LQKV), 427 to 462 (ANDE…DGGD), and 463 to 498 (DCVD…GTDW). The Ca(2+) site is built by Asp-368, Asp-370, Asp-372, Glu-379, Asp-404, Thr-410, Glu-415, Asp-440, Asp-442, Asn-444, Tyr-446, Glu-451, Asp-476, Asp-478, Asp-480, and Arg-482. The residue at position 484 (Ser-484) is a Phosphoserine. Glu-487 provides a ligand contact to Ca(2+). At Ser-522 the chain carries Phosphoserine.

Belongs to the protein kinase superfamily. Ser/Thr protein kinase family. CDPK subfamily.

The protein resides in the cell membrane. It carries out the reaction L-seryl-[protein] + ATP = O-phospho-L-seryl-[protein] + ADP + H(+). The catalysed reaction is L-threonyl-[protein] + ATP = O-phospho-L-threonyl-[protein] + ADP + H(+). With respect to regulation, activated by calcium. Autophosphorylation may play an important role in the regulation of the kinase activity. Its function is as follows. May play a role in signal transduction pathways that involve calcium as a second messenger. This chain is Calcium-dependent protein kinase 13 (CPK13), found in Arabidopsis thaliana (Mouse-ear cress).